Here is a 305-residue protein sequence, read N- to C-terminus: Glycine--tRNA ligase alpha subunit (305 aa).

Belongs to the class-II aminoacyl-tRNA synthetase family. Tetramer of two alpha and two beta subunits.

Its subcellular location is the cytoplasm. It catalyses the reaction tRNA(Gly) + glycine + ATP = glycyl-tRNA(Gly) + AMP + diphosphate. In Streptococcus pyogenes serotype M12 (strain MGAS2096), this protein is Glycine--tRNA ligase alpha subunit.